The chain runs to 325 residues: Elongation factor P--(R)-beta-lysine ligase (325 aa).

76–78 serves as a coordination point for substrate; sequence SPE. ATP contacts are provided by residues 100–102 and N109; that span reads RNE. Y118 lines the substrate pocket. ATP is bound at residue 244–245; the sequence is EL. Residue E251 participates in substrate binding. G300 provides a ligand contact to ATP.

It belongs to the class-II aminoacyl-tRNA synthetase family. EpmA subfamily. In terms of assembly, homodimer.

It carries out the reaction D-beta-lysine + L-lysyl-[protein] + ATP = N(6)-((3R)-3,6-diaminohexanoyl)-L-lysyl-[protein] + AMP + diphosphate + H(+). Functionally, with EpmB is involved in the beta-lysylation step of the post-translational modification of translation elongation factor P (EF-P). Catalyzes the ATP-dependent activation of (R)-beta-lysine produced by EpmB, forming a lysyl-adenylate, from which the beta-lysyl moiety is then transferred to the epsilon-amino group of a conserved specific lysine residue in EF-P. The chain is Elongation factor P--(R)-beta-lysine ligase from Yersinia pseudotuberculosis serotype O:1b (strain IP 31758).